Consider the following 147-residue polypeptide: Large ribosomal subunit protein uL15 (147 aa).

It belongs to the universal ribosomal protein uL15 family. Part of the 50S ribosomal subunit.

Functionally, binds to the 23S rRNA. This Blochmanniella floridana protein is Large ribosomal subunit protein uL15.